The following is a 186-amino-acid chain: Cell division protein ZapC (186 aa).

Belongs to the ZapC family. As to quaternary structure, interacts directly with FtsZ.

Its subcellular location is the cytoplasm. Functionally, contributes to the efficiency of the cell division process by stabilizing the polymeric form of the cell division protein FtsZ. Acts by promoting interactions between FtsZ protofilaments and suppressing the GTPase activity of FtsZ. This chain is Cell division protein ZapC, found in Musicola paradisiaca (strain Ech703) (Dickeya paradisiaca).